The following is a 327-amino-acid chain: Arabinose 5-phosphate isomerase KdsD (327 aa).

Residues 41–183 (ILENNRDKSR…AIALLKAKNF (143 aa)) enclose the SIS domain. Residues 74–75 (GT), histidine 81, histidine 87, 113–122 (GLLPMIKHLD), 147–149 (HVD), threonine 221, and glutamate 273 each bind substrate. Residue histidine 81 participates in Zn(2+) binding. The CBS 1 domain occupies 209–268 (MRKGNEIPIVKPTDNIRKAILEISDKGVGNTLVAENNTLLGIFTDGDLRRMFEAESFNSQ). Residues 275–327 (MTKNPKSISKEEMAITALEKMEKYEITSLAVVDNGHNILGIVTMHDLIKLELR) enclose the CBS 2 domain.

Belongs to the SIS family. GutQ/KpsF subfamily. In terms of assembly, homotetramer.

The enzyme catalyses D-arabinose 5-phosphate = D-ribulose 5-phosphate. The protein operates within carbohydrate biosynthesis; 3-deoxy-D-manno-octulosonate biosynthesis; 3-deoxy-D-manno-octulosonate from D-ribulose 5-phosphate: step 1/3. It functions in the pathway bacterial outer membrane biogenesis; lipopolysaccharide biosynthesis. With respect to regulation, inhibited by hydroxamates, mimicking the putative enediol reaction intermediate. Most potent inhibition, with an IC(50) of 0.7 uM, is obtained with the 4 carbon-based hydroxamate containing acetyl moieties. Its function is as follows. Involved in the biosynthesis of 3-deoxy-D-manno-octulosonate (KDO), a unique 8-carbon sugar component of lipopolysaccharides (LPSs). Catalyzes the reversible aldol-ketol isomerization between D-ribulose 5-phosphate (Ru5P) and D-arabinose 5-phosphate (A5P). This is Arabinose 5-phosphate isomerase KdsD (kdsD) from Francisella tularensis subsp. tularensis (strain SCHU S4 / Schu 4).